The primary structure comprises 387 residues: S-adenosylmethionine synthase (387 aa).

Position 16 (His16) interacts with ATP. Asp18 contacts Mg(2+). Glu44 contributes to the K(+) binding site. L-methionine-binding residues include Glu57 and Gln100. Positions 100–110 are flexible loop; the sequence is QSPDIAQGVDR. Residues 167–169, 232–233, Asp241, 247–248, Ala264, and Lys268 contribute to the ATP site; these read DAK, RF, and RK. Asp241 contacts L-methionine. Lys272 contacts L-methionine.

Belongs to the AdoMet synthase family. In terms of assembly, homotetramer; dimer of dimers. It depends on Mg(2+) as a cofactor. The cofactor is K(+).

It localises to the cytoplasm. The catalysed reaction is L-methionine + ATP + H2O = S-adenosyl-L-methionine + phosphate + diphosphate. It participates in amino-acid biosynthesis; S-adenosyl-L-methionine biosynthesis; S-adenosyl-L-methionine from L-methionine: step 1/1. Functionally, catalyzes the formation of S-adenosylmethionine (AdoMet) from methionine and ATP. The overall synthetic reaction is composed of two sequential steps, AdoMet formation and the subsequent tripolyphosphate hydrolysis which occurs prior to release of AdoMet from the enzyme. The chain is S-adenosylmethionine synthase from Cupriavidus pinatubonensis (strain JMP 134 / LMG 1197) (Cupriavidus necator (strain JMP 134)).